Consider the following 529-residue polypeptide: tRNA-2-methylthio-N(6)-dimethylallyladenosine synthase 1 (529 aa).

A disordered region spans residues 1–21 (MTQDHIVTERPPATRNDTAGN). The MTTase N-terminal domain maps to 25–141 (RTYEVRTLGC…LPVLLERSRH (117 aa)). Residues cysteine 34, cysteine 70, cysteine 104, cysteine 178, cysteine 182, and cysteine 185 each contribute to the [4Fe-4S] cluster site. The Radical SAM core domain maps to 164–407 (RDSAYAAWVS…VALQERISLE (244 aa)). Residues 410 to 480 (RSLVGTRQEL…PHHLIADGPL (71 aa)) form the TRAM domain. Residues 481 to 504 (LQHRRTPAGDASERGQTPTTRGVG) are disordered.

It belongs to the methylthiotransferase family. MiaB subfamily. As to quaternary structure, monomer. It depends on [4Fe-4S] cluster as a cofactor.

It is found in the cytoplasm. It carries out the reaction N(6)-dimethylallyladenosine(37) in tRNA + (sulfur carrier)-SH + AH2 + 2 S-adenosyl-L-methionine = 2-methylsulfanyl-N(6)-dimethylallyladenosine(37) in tRNA + (sulfur carrier)-H + 5'-deoxyadenosine + L-methionine + A + S-adenosyl-L-homocysteine + 2 H(+). In terms of biological role, catalyzes the methylthiolation of N6-(dimethylallyl)adenosine (i(6)A), leading to the formation of 2-methylthio-N6-(dimethylallyl)adenosine (ms(2)i(6)A) at position 37 in tRNAs that read codons beginning with uridine. The chain is tRNA-2-methylthio-N(6)-dimethylallyladenosine synthase 1 from Mycobacterium marinum (strain ATCC BAA-535 / M).